The primary structure comprises 174 residues: von Hippel-Lindau tumor suppressor homolog (174 aa).

This sequence belongs to the VHL family. Interacts with hif-1 (hydroxylated on 'Pro-621'); the interaction induces hif-1 degradation. May be a component of the cullin E3 ubiquitin ligase complex.

The protein operates within protein modification; protein ubiquitination. In terms of biological role, involved in the response to variation in environmental oxygen levels by targeting the hypoxia-inducible transcription factor hif-1 for proteasomal degradation when oxygen levels are normal (around 20%). By regulating hif-1 expression, plays a role in iron homeostasis, aging, heat acclimation and progeny size. Mediates resistance to enteropathogenic E.coli. Mediates susceptibility to B.thuringiensis pore-forming toxins. Not involved in P.aeruginosa susceptibility. The sequence is that of von Hippel-Lindau tumor suppressor homolog from Caenorhabditis elegans.